The chain runs to 1460 residues: ABC transporter C family member 5 (1460 aa).

2 disordered regions span residues 1–23 (MKYN…NESE) and 37–68 (GNNN…KKKN). The span at 37 to 55 (GNNNNDINNNNNINNNNDS) shows a compositional bias: low complexity. The next 5 helical transmembrane spans lie at 196 to 216 (FALS…GPIF), 238 to 258 (LGYY…IFLY), 320 to 340 (LIFA…CVGW), 425 to 445 (LIVV…TVYY), and 456 to 476 (IFAA…LPYG). An ABC transmembrane type-1 1 domain is found at 196-482 (FALSWVHFGL…LPYGYNIYIQ (287 aa)). The disordered stretch occupies residues 537-567 (IKPQTNPPPPRTTPSNDKSSPSGNNSNNEKK). Residues 551–563 (SNDKSSPSGNNSN) are compositionally biased toward polar residues. The region spanning 560–783 (NNSNNEKKEV…INSAYGNSSL (224 aa)) is the ABC transporter 1 domain. ATP is bound at residue 593–600 (GPVGSGKS). The next 4 helical transmembrane spans lie at 842 to 862 (MYYV…GYCI), 922 to 942 (AGEF…LIIV), 1014 to 1034 (ILVI…PIII), and 1108 to 1128 (WLGL…CIFI). The ABC transmembrane type-1 2 domain maps to 853 to 1166 (FLIALLGYCI…ATQQLAELET (314 aa)). The 235-residue stretch at 1210–1444 (IIFENVVMSY…ENSLFNWLID (235 aa)) folds into the ABC transporter 2 domain. 1244 to 1251 (GRTGSGKS) contributes to the ATP binding site.

This sequence belongs to the ABC transporter superfamily. ABCC family. Conjugate transporter (TC 3.A.1.208) subfamily.

It localises to the membrane. This Dictyostelium discoideum (Social amoeba) protein is ABC transporter C family member 5 (abcC5).